We begin with the raw amino-acid sequence, 297 residues long: Phosphatidylglycerol--prolipoprotein diacylglyceryl transferase (297 aa).

Transmembrane regions (helical) follow at residues 20–40 (FLTIRWYGFLISVSVIIGLFV), 50–70 (INPLYISEILPSLIIFSIIGA), 105–125 (AVWEGGIAIHGGLIGGLLSII), and 133–153 (IHLKTFIDILIPSIILGQSIG). Arginine 154 is an a 1,2-diacyl-sn-glycero-3-phospho-(1'-sn-glycerol) binding site. A run of 3 helical transmembrane segments spans residues 193–213 (PTFLYESLWNFLIFILLIFVF), 225–245 (GFISCLYLISYSFGRFWIEGL), and 266–286 (AQFISIFLFSSGLIGIFFLRL).

It belongs to the Lgt family.

Its subcellular location is the cell inner membrane. It catalyses the reaction L-cysteinyl-[prolipoprotein] + a 1,2-diacyl-sn-glycero-3-phospho-(1'-sn-glycerol) = an S-1,2-diacyl-sn-glyceryl-L-cysteinyl-[prolipoprotein] + sn-glycerol 1-phosphate + H(+). It functions in the pathway protein modification; lipoprotein biosynthesis (diacylglyceryl transfer). In terms of biological role, catalyzes the transfer of the diacylglyceryl group from phosphatidylglycerol to the sulfhydryl group of the N-terminal cysteine of a prolipoprotein, the first step in the formation of mature lipoproteins. In Prochlorococcus marinus (strain MIT 9312), this protein is Phosphatidylglycerol--prolipoprotein diacylglyceryl transferase.